Here is a 426-residue protein sequence, read N- to C-terminus: 4-hydroxy-3-methylbut-2-en-1-yl diphosphate synthase (flavodoxin) (426 aa).

[4Fe-4S] cluster-binding residues include cysteine 310, cysteine 313, cysteine 356, and glutamate 363.

This sequence belongs to the IspG family. [4Fe-4S] cluster serves as cofactor.

The enzyme catalyses (2E)-4-hydroxy-3-methylbut-2-enyl diphosphate + oxidized [flavodoxin] + H2O + 2 H(+) = 2-C-methyl-D-erythritol 2,4-cyclic diphosphate + reduced [flavodoxin]. It participates in isoprenoid biosynthesis; isopentenyl diphosphate biosynthesis via DXP pathway; isopentenyl diphosphate from 1-deoxy-D-xylulose 5-phosphate: step 5/6. Functionally, converts 2C-methyl-D-erythritol 2,4-cyclodiphosphate (ME-2,4cPP) into 1-hydroxy-2-methyl-2-(E)-butenyl 4-diphosphate. In Rhodopseudomonas palustris (strain BisA53), this protein is 4-hydroxy-3-methylbut-2-en-1-yl diphosphate synthase (flavodoxin).